The primary structure comprises 89 residues: MAKKSKIAKEKRIEATVAKYAERRQALKAAGNYTELAKLPRNASPVRIHRRDSLDGRPHAYLRKFGMSRLNFRRLAHAGQIPGVKKASW.

This sequence belongs to the universal ribosomal protein uS14 family. As to quaternary structure, part of the 30S ribosomal subunit. Contacts proteins S3 and S10.

Functionally, binds 16S rRNA, required for the assembly of 30S particles and may also be responsible for determining the conformation of the 16S rRNA at the A site. The polypeptide is Small ribosomal subunit protein uS14A (Lactiplantibacillus plantarum (strain ATCC BAA-793 / NCIMB 8826 / WCFS1) (Lactobacillus plantarum)).